Consider the following 819-residue polypeptide: Myosin light chain kinase 3 (819 aa).

A disordered region spans residues 146 to 460 (VPWRRGSPGD…PGVGNPEPEQ (315 aa)). At Ser-152 the chain carries Phosphoserine. Basic and acidic residues-rich tracts occupy residues 158 to 170 (EENK…EGAK) and 183 to 196 (DARE…KADV). Residues 307–318 (GPGPQCPGPPGL) show a composition bias toward pro residues. A phosphoserine mark is found at Ser-355, Ser-401, and Ser-408. One can recognise a Protein kinase domain in the interval 515-770 (VCQHEVLGGG…ATQCLKHEWL (256 aa)). Residues 521-529 (LGGGRFGQV) and Lys-544 each bind ATP. Catalysis depends on Asp-636, which acts as the Proton acceptor.

The protein belongs to the protein kinase superfamily. CAMK Ser/Thr protein kinase family. Mg(2+) is required as a cofactor. Post-translationally, phosphorylated on serine residues.

Its subcellular location is the cytoplasm. It catalyses the reaction L-seryl-[myosin light chain] + ATP = O-phospho-L-seryl-[myosin light chain] + ADP + H(+). The enzyme catalyses L-threonyl-[myosin light chain] + ATP = O-phospho-L-threonyl-[myosin light chain] + ADP + H(+). In terms of biological role, kinase that phosphorylates MYL2 in vitro. Promotes sarcomere formation in cardiomyocytes and increases cardiomyocyte contractility. The protein is Myosin light chain kinase 3 (MYLK3) of Pongo abelii (Sumatran orangutan).